The sequence spans 427 residues: Stemphyloxin II biosynthesis cluster transcription factor sthR (427 aa).

A DNA-binding region (zn(2)-C6 fungal-type) is located at residues 15–45 (CDRCRKQKLRCPPDKDDMGTCGRCLRAGVAC). The interval 51-70 (KPRGRSQKHGISTDGTSHVS) is disordered. The segment covering 59–69 (HGISTDGTSHV) has biased composition (polar residues).

Its subcellular location is the nucleus. In terms of biological role, transcription factor that regulates the expression of the gene cluster that mediates the biosynthesis of the phytotoxin stemphyloxin II. This Phaeosphaeria nodorum (strain SN15 / ATCC MYA-4574 / FGSC 10173) (Glume blotch fungus) protein is Stemphyloxin II biosynthesis cluster transcription factor sthR.